Here is a 195-residue protein sequence, read N- to C-terminus: Apoptosis-associated speck-like protein containing a CARD (195 aa).

Residues 1–91 (MGCTRDAILD…AEQLQETMSK (91 aa)) enclose the Pyrin domain. Glycyl lysine isopeptide (Lys-Gly) (interchain with G-Cter in ubiquitin) cross-links involve residues lysine 55 and lysine 174. The 89-residue stretch at 107 to 195 (TAKPGLHFVD…PYLVDDLEQS (89 aa)) folds into the CARD domain. A Phosphoserine modification is found at serine 195.

In terms of assembly, self-associates; enforced oligomerization induces apoptosis, NF-kappa-B regulation and interleukin-1 beta secretion. Homooligomers can form disk-like particles of approximately 12 nm diameter and approximately 1 nm height. Component of several inflammasomes containing one pattern recognition receptor/sensor, such as NLRP1, NLRP2, NLRP3, NLRP6, NLRC4, AIM2, MEFV or NOD2, and probably NLRC4 or NLRP12. Major component of the ASC pyroptosome, a 1-2 um supramolecular assembly (one per macrophage cell) which consists of oligomerized PYCARD dimers and CASP1. Interacts with CASP1 (precursor form); the interaction induces activation of CASP1 leading to the processing of interleukin-1 beta; PYCARD competes with RIPK2 for binding to CASP1. Interacts with NLRP3; the interaction requires the homooligomerization of NLRP3. Interacts with NLRP2, NLRC4, MEFV, CARD16, AIM2, NOD2, RIGI, RIPK2, PYDC1, PYDC2, NLRP10, CASP8, CHUK, IKBKB and BAX. Component of the AIM2 PANoptosome complex, a multiprotein complex that drives inflammatory cell death (PANoptosis). In terms of processing, phosphorylated. Post-translationally, 'Lys-63'-linked polyubiquitination by TRAF3 is critical for speck formation and inflammasome activation. 'Lys-63'-linked deubiquitinated by USP50; a crucial step for NLRP3-mediated inflammasome activation. 'Lys-63'-linked polyubiquitination by PELI1 is also critical for speck formation and inflammasome activation. Deubiquitinated by USP3 that cleaves 'Lys-48'-linked ubiquitin chains and strengthens its stability by blocking proteasomal degradation.

The protein resides in the cytoplasm. It is found in the inflammasome. It localises to the endoplasmic reticulum. Its subcellular location is the mitochondrion. The protein localises to the nucleus. Functionally, functions as a key mediator in apoptosis and inflammation. Promotes caspase-mediated apoptosis involving predominantly caspase-8 and also caspase-9 in a probable cell type-specific manner. Involved in activation of the mitochondrial apoptotic pathway, promotes caspase-8-dependent proteolytic maturation of BID independently of FADD in certain cell types and also mediates mitochondrial translocation of BAX and activates BAX-dependent apoptosis coupled to activation of caspase-9, -2 and -3. Involved in innate immune response by acting as an integral adapter in the assembly of various inflammasomes (NLRP2, NLRP3, NLRP6 and AIM2) which recruit and activate caspase-1 leading to processing and secretion of pro-inflammatory cytokines. Caspase-1-dependent inflammation leads to macrophage pyroptosis, a form of cell death. The function as activating adapter in different types of inflammasomes is mediated by the pyrin and CARD domains and their homotypic interactions. Clustered PYCARD nucleates the formation of caspase-1 filaments through the interaction of their respective CARD domains, acting as a platform for of caspase-1 polymerization. In the NLRC4 inflammasomes seems not be required but facilitates the processing of procaspase-1. In cooperation with NOD2 involved in an inflammasome activated by bacterial muramyl dipeptide leading to caspase-1 activation. May be involved in RIGI-triggered pro-inflammatory responses and inflammasome activation. In collaboration with AIM2 which detects cytosolic double-stranded DNA may also be involved in a caspase-1-independent cell death that involves caspase-8. In adaptive immunity may be involved in maturation of dendritic cells to stimulate T-cell immunity and in cytoskeletal rearrangements coupled to chemotaxis and antigen uptake may be involved in post-transcriptional regulation of the guanine nucleotide exchange factor DOCK2; the latter function is proposed to involve the nuclear form. Also involved in transcriptional activation of cytokines and chemokines independent of the inflammasome; this function may involve AP-1, NF-kappa-B, MAPK and caspase-8 signaling pathways. For regulation of NF-kappa-B activating and inhibiting functions have been reported. Modulates NF-kappa-B induction at the level of the IKK complex by inhibiting kinase activity of CHUK and IKBK. Proposed to compete with RIPK2 for association with CASP1 thereby down-regulating CASP1-mediated RIPK2-dependent NF-kappa-B activation and activating interleukin-1 beta processing. Modulates host resistance to DNA virus infection, probably by inducing the cleavage of and inactivating CGAS in presence of cytoplasmic double-stranded DNA. In Bos taurus (Bovine), this protein is Apoptosis-associated speck-like protein containing a CARD (PYCARD).